A 1612-amino-acid polypeptide reads, in one-letter code: Phospholipid-transporting ATPase DNF2 (1612 aa).

Positions 1–74 are disordered; that stretch reads MSSPSKPTSP…MKDISTPDLS (74 aa). The Cytoplasmic segment spans residues 1 to 252; it reads MSSPSKPTSP…TFFPKNILFQ (252 aa). Residues 20–30 show a composition bias toward low complexity; sequence GSASNGLSSMS. The residue at position 70 (Thr-70) is a Phosphothreonine. Ser-85 bears the Phosphoserine mark. The helical transmembrane segment at 253–273 threads the bilayer; it reads FHNFANIYFLILLILGAFQIF. An involved in phosphatidylcholine substrate selection region spans residues 272–279; that stretch reads IFGVTNPG. Residues 274-277 lie on the Extracellular side of the membrane; sequence GVTN. A helical transmembrane segment spans residues 278–298; that stretch reads PGFASVPLIVIVIITAIKDGI. At 299 to 598 the chain is on the cytoplasmic side; that stretch reads EDSRRTVLDL…RISRELNFSV (300 aa). The segment covering 364-373 has biased composition (basic and acidic residues); it reads KLQKKREELR. The tract at residues 364–384 is disordered; that stretch reads KLQKKREELRRKRNSRSFGPR. Ser-389, Ser-392, Ser-396, and Ser-403 each carry phosphoserine. Tyr-406 carries the post-translational modification Phosphotyrosine. The chain crosses the membrane as a helical span at residues 599–619; sequence ILNFVLLFILCFTAGIVNGVY. Residues 620–639 lie on the Extracellular side of the membrane; that stretch reads YKQKPRSRDYFEFGTIGGSA. The segment at 631–635 is involved in phosphatidylcholine substrate selection; sequence EFGTI. The helical transmembrane segment at 640 to 660 threads the bilayer; the sequence is STNGFVSFWVAVILYQSLVPI. Over 661–1231 the chain is Cytoplasmic; sequence SLYISVEIIK…WCYKRLAEMI (571 aa). The 4-aspartylphosphate intermediate role is filled by Asp-712. The ATP site is built by Asp-712, Lys-713, and Thr-714. Asp-712 serves as a coordination point for Mg(2+). Thr-714 is a Mg(2+) binding site. Thr-782 carries the phosphothreonine modification. ATP is bound by residues Glu-846, Phe-887, Ser-889, Lys-892, and Lys-916. A Glycyl lysine isopeptide (Lys-Gly) (interchain with G-Cter in ubiquitin) cross-link involves residue Lys-938. Residues Arg-952, Thr-953, Thr-1032, Gly-1033, Asp-1034, Arg-1147, and Lys-1153 each coordinate ATP. Asp-1173 is a Mg(2+) binding site. Positions 1176 and 1177 each coordinate ATP. Residue Asp-1177 participates in Mg(2+) binding. A helical transmembrane segment spans residues 1232 to 1252; it reads PQFFYKNVIFTLSLFWYGIYN. Residues 1253-1262 are Extracellular-facing; that stretch reads NFDGSYLFEY. Residues 1263–1283 traverse the membrane as a helical segment; that stretch reads TYLTFYNLAFTSVPVILLAVL. Residues 1284–1313 are Cytoplasmic-facing; the sequence is DQDVSDTVSMLVPQLYRVGILRKEWNQTKF. The chain crosses the membrane as a helical span at residues 1314 to 1334; it reads LWYMLDGVYQSVICFFFPYLA. The Extracellular segment spans residues 1335-1350; the sequence is YHKNMVVTENGLGLDH. The helical transmembrane segment at 1351–1371 threads the bilayer; that stretch reads RYFVGVFVTAIAVTSCNFYVF. Topologically, residues 1372–1377 are cytoplasmic; the sequence is MEQYRW. The helical transmembrane segment at 1378–1398 threads the bilayer; it reads DWFCGLFICLSLAVFYGWTGI. Residues 1399–1418 lie on the Extracellular side of the membrane; it reads WTSSSSSNEFYKGAARVFAQ. The helical transmembrane segment at 1419–1439 threads the bilayer; that stretch reads PAYWAVLFVGVLFCLLPRFTI. A 1,2-diacyl-sn-glycero-3-phospho-L-serine is bound at residue Arg-1436. Topologically, residues 1440–1612 are cytoplasmic; sequence DCIRKIFYPK…TLLSQRSRDR (173 aa). Position 1542 is a phosphoserine (Ser-1542). Residues 1544–1563 form a disordered region; it reads VTTTNNLPRRSMASARGNKL. Ser-1592 is subject to Phosphoserine.

The protein belongs to the cation transport ATPase (P-type) (TC 3.A.3) family. Type IV subfamily. In terms of assembly, component of a flippase complex consisting of DNF1 and LEM3. Interacts with LEM3; the interaction is direct. Requires Mg(2+) as cofactor. Post-translationally, phosphorylated by FPK1 and KIN82.

It is found in the cell membrane. It carries out the reaction ATP + H2O + phospholipidSide 1 = ADP + phosphate + phospholipidSide 2.. It catalyses the reaction a 1,2-diacyl-sn-glycero-3-phosphoethanolamine(out) + ATP + H2O = a 1,2-diacyl-sn-glycero-3-phosphoethanolamine(in) + ADP + phosphate + H(+). The catalysed reaction is a 1,2-diacyl-sn-glycero-3-phosphocholine(out) + ATP + H2O = a 1,2-diacyl-sn-glycero-3-phosphocholine(in) + ADP + phosphate + H(+). The enzyme catalyses a beta-D-glucosyl-(1&lt;-&gt;1')-N-acylsphing-4-enine(out) + ATP + H2O = a beta-D-glucosyl-(1&lt;-&gt;1')-N-acylsphing-4-enine(in) + ADP + phosphate + H(+). It carries out the reaction a 1,2-diacyl-sn-glycero-3-phospho-L-serine(out) + ATP + H2O = a 1,2-diacyl-sn-glycero-3-phospho-L-serine(in) + ADP + phosphate + H(+). Phosphatidylcholine flippase activity is inhibited by glucosylsphingosine, lactosylsphingosine, lysophosphatidylcholine and to a lesser degree sphingosine-1-phosphate and lysosphingomyelin. Glucosylceramide flippase activity is inhibited by lysophosphatidylcholine, glucosylsphingosine and to a lesser degree lactosylsphingosine whereas lysosphingomyelin has a stimulatory effect at low concentrations. Functionally, catalytic component of a P4-ATPase flippase complex which catalyzes the hydrolysis of ATP coupled to the transport of glucosylceramide, phosphatidylcholine, phosphatidylethanolamine, and small amounts of phosphatidylserine from the lumenal to the cytosolic leaflet of the cell membrane and ensures the maintenance of asymmetric distribution of phospholipids. Does not appear to transport sphingomyelin, inositol phosphoceramide or phosphatidic acid. Required for efficient endocytosis. Required for protein transport from Golgi to vacuoles. The chain is Phospholipid-transporting ATPase DNF2 (DNF2) from Saccharomyces cerevisiae (strain ATCC 204508 / S288c) (Baker's yeast).